A 197-amino-acid chain; its full sequence is Nucleoside triphosphate pyrophosphatase (197 aa).

Asp-75 functions as the Proton acceptor in the catalytic mechanism.

It belongs to the Maf family. The cofactor is a divalent metal cation.

Its subcellular location is the cytoplasm. The enzyme catalyses a ribonucleoside 5'-triphosphate + H2O = a ribonucleoside 5'-phosphate + diphosphate + H(+). It catalyses the reaction a 2'-deoxyribonucleoside 5'-triphosphate + H2O = a 2'-deoxyribonucleoside 5'-phosphate + diphosphate + H(+). Functionally, nucleoside triphosphate pyrophosphatase. May have a dual role in cell division arrest and in preventing the incorporation of modified nucleotides into cellular nucleic acids. In Haemophilus ducreyi (strain 35000HP / ATCC 700724), this protein is Nucleoside triphosphate pyrophosphatase.